The chain runs to 451 residues: Tubulin gamma-1 chain (451 aa).

Serine 131 is modified (phosphoserine; by BRSK1). 142–148 contributes to the GTP binding site; the sequence is AGGTGSG.

Belongs to the tubulin family. In terms of assembly, component of the gamma-tubulin ring complex (gTuRC) consisting of TUBGCP2, TUBGCP3, TUBGCP4, TUBGCP5 and TUBGCP6 and gamma-tubulin TUBG1 or TUBG2. TUBGCP2, TUBGCP3, TUBGCP4, TUBGCP5 and TUBGCP6 assemble in a 5:5:2:1:1 stoichiometry; each is associated with a gamma-tubulin, thereby arranging 14 gamma-tubulins in a helical manner. Gamma-tubulin at the first position is blocked by TUBGCP3 at the last position, allowing 13 protafilaments to grow into a microtubule. The gTuRC (via TUBGCP3 and TUBGCP6) interacts with ACTB and MZT1; the interactions form a luminal bridge that stabilizes the initial structure during complex assembly. The gTuRC (via TUBGCP2) interacts with MZT2A/MZT2B and CDK5RAP2 (via CM1 motif); the interactions play a role in gTuRC activation. Interacts with alpha-beta tubulin heterodimers; the interaction allows microtubules to nucleate from the gTuRC. Interacts with B9D2. Interacts with CDK5RAP2; the interaction is leading to centrosomal localization of TUBG1 and CDK5RAP2. Interacts with CIMAP3. Interacts with SAS6 and NUP62 at the centrosome. Interacts with EML3 (phosphorylated at 'Thr-881') and HAUS8. Interacts with DNM2; this interaction may participate in centrosome cohesion. Interacts with CCDC66. Phosphorylation at Ser-131 by BRSK1 regulates centrosome duplication, possibly by mediating relocation of gamma-tubulin and its associated proteins from the cytoplasm to the centrosome.

Its subcellular location is the cytoplasm. The protein resides in the cytoskeleton. It is found in the microtubule organizing center. The protein localises to the centrosome. It localises to the spindle. Functionally, tubulin is the major constituent of microtubules, protein filaments consisting of alpha- and beta-tubulin heterodimers. Gamma-tubulin is a key component of the gamma-tubulin ring complex (gTuRC) which mediates microtubule nucleation. The gTuRC regulates the minus-end nucleation of alpha-beta tubulin heterodimers that grow into microtubule protafilaments, a critical step in centrosome duplication and spindle formation. This is Tubulin gamma-1 chain from Canis lupus familiaris (Dog).